Reading from the N-terminus, the 315-residue chain is tRNA pseudouridine synthase B (315 aa).

Asp-47 serves as the catalytic Nucleophile.

Belongs to the pseudouridine synthase TruB family. Type 1 subfamily.

It carries out the reaction uridine(55) in tRNA = pseudouridine(55) in tRNA. Responsible for synthesis of pseudouridine from uracil-55 in the psi GC loop of transfer RNAs. The protein is tRNA pseudouridine synthase B of Shewanella amazonensis (strain ATCC BAA-1098 / SB2B).